Consider the following 343-residue polypeptide: Protease HtpX homolog (343 aa).

2 helical membrane-spanning segments follow: residues 7–24 and 29–46; these read TMLL…GYLV and GMVV…FSYW. A Zn(2+)-binding site is contributed by His130. Glu131 is a catalytic residue. Position 134 (His134) interacts with Zn(2+). Helical transmembrane passes span 145 to 165 and 177 to 197; these read LTAT…LMGM and GAGM…AMLV. Zn(2+) is bound at residue Glu206. The tract at residues 308-343 is disordered; sequence NLEDEDLNPEAQNGFTHNQKKKTVRRGKDRPTWLRH. Over residues 325 to 335 the composition is skewed to basic residues; sequence NQKKKTVRRGK.

Belongs to the peptidase M48B family. Zn(2+) is required as a cofactor.

It is found in the cell inner membrane. The chain is Protease HtpX homolog from Bartonella bacilliformis (strain ATCC 35685 / KC583 / Herrer 020/F12,63).